We begin with the raw amino-acid sequence, 317 residues long: Olfactory receptor 6P1 (317 aa).

At 1–25 (MRNLSGGHVEEFVLVGFPTTPPLQL) the chain is on the extracellular side. An N-linked (GlcNAc...) asparagine glycan is attached at asparagine 3. The helical transmembrane segment at 26 to 46 (LLFVLFFAIYLLTLLENALIV) threads the bilayer. Residues 47-54 (FTIWLAPS) lie on the Cytoplasmic side of the membrane. A helical transmembrane segment spans residues 55–75 (LHRPMYFFLGHLSFLELWYIN). Residues 76–99 (VTIPRLLAAFLTQDGRVSYVGCMT) are Extracellular-facing. Cysteines 97 and 189 form a disulfide. The chain crosses the membrane as a helical span at residues 100 to 120 (QLYFFIALACTECVLLAVMAY). Over 121–139 (DRYLAICGPLLYPSLMPSS) the chain is Cytoplasmic. The helical transmembrane segment at 140–160 (LATRLAAASWGSGFFSSMMKL) threads the bilayer. Residues 161-197 (LFISQLSYCGPNIINHFFCDISPLLNLTCSDKEQAEL) are Extracellular-facing. N-linked (GlcNAc...) asparagine glycosylation is present at asparagine 186. The chain crosses the membrane as a helical span at residues 198-217 (VDFLLALVMILLPLLAVVSS). Topologically, residues 218-237 (YTAIIAAILRIPTSRGRHKA) are cytoplasmic. The chain crosses the membrane as a helical span at residues 238–258 (FSTCAAHLAVVVIYYSSTLFT). The Extracellular segment spans residues 259–271 (YARPRAMYTFNHN). A helical membrane pass occupies residues 272-292 (KIISVLYTIIVPFFNPAIYCL). Topologically, residues 293–317 (RNKEVKEAFRKTVMGRCHYPRDVQD) are cytoplasmic.

This sequence belongs to the G-protein coupled receptor 1 family.

Its subcellular location is the cell membrane. Its function is as follows. Odorant receptor. The sequence is that of Olfactory receptor 6P1 (OR6P1) from Homo sapiens (Human).